We begin with the raw amino-acid sequence, 325 residues long: MKNQLLDAKVASEEQETVLRPSLLNDFIGQNQMKSNLTIFITSSIERDESLDHTLLHGPPGLGKTSIAQIIAKEKNVNLKSTAGPILSKAADLAAILTNLQKNDVLFIDEIHRLNIHVEEILYSAMEDFSLDIMIGEGPSARSVKIYLPKFTLIGATTRLGLISKPLCDRFGIHLKLNFYSCEELTQIVERGAKVLNVALDTNAAIEIANRSRGTPRIALRLLKRVRDFGIYQNINPLNQQITDYALNQLGIDKLGLDSSDHKYLRFIAENYDGGPVGIDTIAAALSEQRDTIEEMIEPYLIQIGFVQRTQRGRVITANALKHLH.

A large ATPase domain (RuvB-L) region spans residues 1–180 (MKNQLLDAKV…FGIHLKLNFY (180 aa)). Residues Leu19, Arg20, Gly61, Lys64, Thr65, Ser66, 127–129 (EDF), Arg170, Tyr180, and Arg217 contribute to the ATP site. Residue Thr65 participates in Mg(2+) binding. Residues 181-251 (SCEELTQIVE…ITDYALNQLG (71 aa)) are small ATPAse domain (RuvB-S). The head domain (RuvB-H) stretch occupies residues 254–325 (KLGLDSSDHK…ITANALKHLH (72 aa)). Positions 290, 309, and 314 each coordinate DNA.

It belongs to the RuvB family. As to quaternary structure, homohexamer. Forms an RuvA(8)-RuvB(12)-Holliday junction (HJ) complex. HJ DNA is sandwiched between 2 RuvA tetramers; dsDNA enters through RuvA and exits via RuvB. An RuvB hexamer assembles on each DNA strand where it exits the tetramer. Each RuvB hexamer is contacted by two RuvA subunits (via domain III) on 2 adjacent RuvB subunits; this complex drives branch migration. In the full resolvosome a probable DNA-RuvA(4)-RuvB(12)-RuvC(2) complex forms which resolves the HJ.

It localises to the cytoplasm. The catalysed reaction is ATP + H2O = ADP + phosphate + H(+). Its function is as follows. The RuvA-RuvB-RuvC complex processes Holliday junction (HJ) DNA during genetic recombination and DNA repair, while the RuvA-RuvB complex plays an important role in the rescue of blocked DNA replication forks via replication fork reversal (RFR). RuvA specifically binds to HJ cruciform DNA, conferring on it an open structure. The RuvB hexamer acts as an ATP-dependent pump, pulling dsDNA into and through the RuvAB complex. RuvB forms 2 homohexamers on either side of HJ DNA bound by 1 or 2 RuvA tetramers; 4 subunits per hexamer contact DNA at a time. Coordinated motions by a converter formed by DNA-disengaged RuvB subunits stimulates ATP hydrolysis and nucleotide exchange. Immobilization of the converter enables RuvB to convert the ATP-contained energy into a lever motion, pulling 2 nucleotides of DNA out of the RuvA tetramer per ATP hydrolyzed, thus driving DNA branch migration. The RuvB motors rotate together with the DNA substrate, which together with the progressing nucleotide cycle form the mechanistic basis for DNA recombination by continuous HJ branch migration. Branch migration allows RuvC to scan DNA until it finds its consensus sequence, where it cleaves and resolves cruciform DNA. The polypeptide is Holliday junction branch migration complex subunit RuvB (Orientia tsutsugamushi (strain Boryong) (Rickettsia tsutsugamushi)).